Reading from the N-terminus, the 580-residue chain is 9,13-epoxylabda-14-ene synthase, chloroplastic (580 aa).

The N-terminal 32 residues, Met1–Thr32, are a transit peptide targeting the chloroplast. Residues Asp322, Asp326, Asn466, Thr470, and Glu474 each coordinate Mg(2+). The short motif at Asp322–Asp326 is the DDXXD motif element.

The protein belongs to the terpene synthase family. It depends on Mg(2+) as a cofactor. Present in both leaves and flowers, with higher levels in leaves.

It is found in the plastid. It localises to the chloroplast. The catalysed reaction is peregrinol diphosphate = (13R)-9,13-epoxylabd-14-ene + diphosphate. The enzyme catalyses (+)-copalyl diphosphate = miltiradiene + diphosphate. It catalyses the reaction 8-hydroxycopalyl diphosphate = (13R)-manoyl oxide + diphosphate. The protein operates within secondary metabolite biosynthesis; terpenoid biosynthesis. Involved in the biosynthesis of labdane-type diterpenoid including marrubiin and other labdane-related furanoid diterpenoids with potential applications as anti-diabetics, analgesics or vasorelaxants. Terpene synthase the catalyzes the conversion of peregrinol diphosphate to 9,13(R)-epoxy-labd-14-ene, from (+)-copalyl diphosphate ((+)-CPP) to miltiradiene and from 8-hydroxycopalyl diphosphate (LPP, labda-13-en-8-ol diphosphate) to manoyl oxide. This is 9,13-epoxylabda-14-ene synthase, chloroplastic from Marrubium vulgare (White horehound).